Here is a 540-residue protein sequence, read N- to C-terminus: Phosphoenolpyruvate carboxykinase (ATP) (540 aa).

Arg-65 is a binding site for substrate. N6-acetyllysine is present on Lys-87. The substrate site is built by Tyr-207 and Lys-213. ATP-binding positions include Lys-213, His-232, and 248–256 (GLSGTGKTT). The Mn(2+) site is built by Lys-213 and His-232. Asp-269 contacts Mn(2+). ATP is bound by residues Glu-297, Arg-333, 449–450 (RI), and Thr-455. Substrate is bound at residue Arg-333. Lys-523 is subject to N6-acetyllysine.

Belongs to the phosphoenolpyruvate carboxykinase (ATP) family. In terms of assembly, monomer. Mn(2+) serves as cofactor.

The protein localises to the cytoplasm. It carries out the reaction oxaloacetate + ATP = phosphoenolpyruvate + ADP + CO2. It functions in the pathway carbohydrate biosynthesis; gluconeogenesis. Involved in the gluconeogenesis. Catalyzes the conversion of oxaloacetate (OAA) to phosphoenolpyruvate (PEP) through direct phosphoryl transfer between the nucleoside triphosphate and OAA. This Shigella flexneri protein is Phosphoenolpyruvate carboxykinase (ATP).